We begin with the raw amino-acid sequence, 211 residues long: MEAIAKHDFSATADDELSFRKTQILKILNMEDDSNWYRAELDGKEGLIPSNYIEMKNHDWYYGRITRADAEKLLSNKHEGAFLIRISESSPGDFSLSVKCPDGVQHFKVLRDAQSKFFLWVVKFNSLNELVEYHRTASVSRSQDVKLRDMIPEEMLVQALYDFVPQESGELDFRRGDVITVTDRSDENWWNGEIGNRKGIFPATYVTPYHS.

The SH3 1 domain maps to 1–58; the sequence is MEAIAKHDFSATADDELSFRKTQILKILNMEDDSNWYRAELDGKEGLIPSNYIEMKNH. The SH2 domain occupies 60-151; sequence WYYGRITRAD…SQDVKLRDMI (92 aa). The SH3 2 domain maps to 152 to 211; that stretch reads PEEMLVQALYDFVPQESGELDFRRGDVITVTDRSDENWWNGEIGNRKGIFPATYVTPYHS.

It belongs to the GRB2/sem-5/DRK family. Interacts with autophosphorylated sev via SH2 domain and Sos and Dab via SH3 domains. Binds to tyrosine phosphorylated Dab via the SH2 domain.

It localises to the membrane. Functionally, required for proper signaling by sevenless. May act to stimulate the ability of Sos to catalyze Ras1 activation by linking sevenless and Sos in a signaling complex. This chain is Protein E(sev)2B (drk), found in Drosophila simulans (Fruit fly).